Here is a 247-residue protein sequence, read N- to C-terminus: 5'-nucleotidase SurE (247 aa).

4 residues coordinate a divalent metal cation: Asp-8, Asp-9, Ser-39, and Asn-91.

It belongs to the SurE nucleotidase family. Requires a divalent metal cation as cofactor.

The protein localises to the cytoplasm. It carries out the reaction a ribonucleoside 5'-phosphate + H2O = a ribonucleoside + phosphate. Nucleotidase that shows phosphatase activity on nucleoside 5'-monophosphates. This is 5'-nucleotidase SurE from Ruthia magnifica subsp. Calyptogena magnifica.